The primary structure comprises 395 residues: Sensor protein DltS (395 aa).

2 consecutive transmembrane segments (helical) span residues 9-29 (FVFL…AVSN) and 136-156 (FLIL…SLYL). The region spanning 177 to 387 (DASHELKTPI…RLEVQLPIDG (211 aa)) is the Histidine kinase domain. Histidine 180 carries the phosphohistidine; by autocatalysis modification.

It localises to the cell membrane. It carries out the reaction ATP + protein L-histidine = ADP + protein N-phospho-L-histidine.. Functionally, member of the two-component regulatory system DltS/DltR. Regulates the expression of the dlt operon. Probably phosphorylates DltR. The chain is Sensor protein DltS (dltS) from Streptococcus agalactiae serotype V (strain ATCC BAA-611 / 2603 V/R).